A 566-amino-acid chain; its full sequence is 4-coumarate--CoA ligase-like 6 (566 aa).

The disordered stretch occupies residues 1–21 (MAATHLHIPPNPKTQTSHQNP). Ser212, Ser213, Gly214, Thr215, Thr216, and Lys220 together coordinate ATP. Residue Tyr263 participates in (E)-4-coumaroyl-AMP binding. A CoA-binding site is contributed by Arg284. Positions 286–356 (DASDVVNVIE…QTLPHVDLIQ (71 aa)) are SBD1. (E)-4-coumaroyl-AMP-binding residues include Ala334, Gln356, Gly357, and Thr361. 5 residues coordinate ATP: Gln356, Gly357, Thr361, Asp442, and Arg457. Residues 357 to 421 (GYGMTESTAV…IQGPGVMKGY (65 aa)) form an SBD2 region. The (E)-4-coumaroyl-AMP site is built by Lys459 and Lys463. CoA-binding residues include Lys465 and Gly466. Residue Lys548 coordinates ATP. A Microbody targeting signal motif is present at residues 564 to 566 (SRL).

It belongs to the ATP-dependent AMP-binding enzyme family. It depends on Mg(2+) as a cofactor. Expressed at very low level in leaves.

Its subcellular location is the peroxisome. The catalysed reaction is (E)-4-coumarate + ATP + CoA = (E)-4-coumaroyl-CoA + AMP + diphosphate. It catalyses the reaction (E)-4-coumarate + ATP + H(+) = (E)-4-coumaroyl-AMP + diphosphate. It carries out the reaction (E)-4-coumaroyl-AMP + CoA = (E)-4-coumaroyl-CoA + AMP + H(+). The enzyme catalyses (E)-ferulate + ATP + CoA = (E)-feruloyl-CoA + AMP + diphosphate. The catalysed reaction is (E)-ferulate + ATP + H(+) = (E)-feruloyl-AMP + diphosphate. It catalyses the reaction (E)-feruloyl-AMP + CoA = (E)-feruloyl-CoA + AMP + H(+). It carries out the reaction (E)-caffeate + ATP + CoA = (E)-caffeoyl-CoA + AMP + diphosphate. The enzyme catalyses (E)-caffeate + ATP + H(+) = (E)-caffeoyl-AMP + diphosphate. The catalysed reaction is (E)-caffeoyl-AMP + CoA = (E)-caffeoyl-CoA + AMP + H(+). It catalyses the reaction (E)-cinnamate + ATP + CoA = (E)-cinnamoyl-CoA + AMP + diphosphate. It carries out the reaction 4-hydroxybenzoate + ATP + CoA = 4-hydroxybenzoyl-CoA + AMP + diphosphate. The enzyme catalyses tetradecanoate + ATP + CoA = tetradecanoyl-CoA + AMP + diphosphate. The catalysed reaction is hexanoate + ATP + CoA = hexanoyl-CoA + AMP + diphosphate. It catalyses the reaction heptanoate + ATP + CoA = heptanoyl-CoA + AMP + diphosphate. Functionally, contributes to jasmonic acid biosynthesis by initiating the beta-oxidative chain shortening of its precursors. Acts as a carboxylate--CoA ligase that can use preferentially p-coumarate, ferulate and caffeate as substrates and, with a lower efficiency, (E)-cinnamate and 4-hydroxybenzoate as substrates. Involved in the biosynthesis of ubiquinone from phenylalanine by activating the propyl side chain of 4-coumarate, and possibly trans-cinnamate and 4-hydroxybenzoate, for subsequent beta-oxidative shortening and the formation of the benzenoid moiety of ubiquinone. Follows a two-step reaction mechanism, wherein the carboxylate substrate first undergoes adenylation by ATP, followed by a thioesterification in the presence of CoA to yield the final CoA thioester. This Arabidopsis thaliana (Mouse-ear cress) protein is 4-coumarate--CoA ligase-like 6.